The chain runs to 184 residues: Threonylcarbamoyl-AMP synthase (184 aa).

The YrdC-like domain maps to 1–184 (MNNLLAVIEL…IFTQHIFRQG (184 aa)).

Belongs to the SUA5 family. TsaC subfamily.

The protein localises to the cytoplasm. The enzyme catalyses L-threonine + hydrogencarbonate + ATP = L-threonylcarbamoyladenylate + diphosphate + H2O. Functionally, required for the formation of a threonylcarbamoyl group on adenosine at position 37 (t(6)A37) in tRNAs that read codons beginning with adenine. Catalyzes the conversion of L-threonine, HCO(3)(-)/CO(2) and ATP to give threonylcarbamoyl-AMP (TC-AMP) as the acyladenylate intermediate, with the release of diphosphate. The polypeptide is Threonylcarbamoyl-AMP synthase (Haemophilus ducreyi (strain 35000HP / ATCC 700724)).